The sequence spans 319 residues: Ribosomal RNA small subunit methyltransferase H (319 aa).

Residues 37–39 (GGH), Asp56, Leu90, Asp104, and Gln111 each bind S-adenosyl-L-methionine.

Belongs to the methyltransferase superfamily. RsmH family.

It localises to the cytoplasm. The enzyme catalyses cytidine(1402) in 16S rRNA + S-adenosyl-L-methionine = N(4)-methylcytidine(1402) in 16S rRNA + S-adenosyl-L-homocysteine + H(+). In terms of biological role, specifically methylates the N4 position of cytidine in position 1402 (C1402) of 16S rRNA. This Nocardioides sp. (strain ATCC BAA-499 / JS614) protein is Ribosomal RNA small subunit methyltransferase H.